A 182-amino-acid polypeptide reads, in one-letter code: uncharacterized protein (182 aa).

Positions 66 to 133 (QKRKRREIKV…NLEIETNSDS (68 aa)) form a coiled coil.

This is an uncharacterized protein from Acanthamoeba polyphaga (Amoeba).